The sequence spans 179 residues: Crossover junction endodeoxyribonuclease RuvC (179 aa).

Catalysis depends on residues Asp-7, Glu-67, and Asp-140. Mg(2+) contacts are provided by Asp-7, Glu-67, and Asp-140.

It belongs to the RuvC family. As to quaternary structure, homodimer which binds Holliday junction (HJ) DNA. The HJ becomes 2-fold symmetrical on binding to RuvC with unstacked arms; it has a different conformation from HJ DNA in complex with RuvA. In the full resolvosome a probable DNA-RuvA(4)-RuvB(12)-RuvC(2) complex forms which resolves the HJ. It depends on Mg(2+) as a cofactor.

Its subcellular location is the cytoplasm. It catalyses the reaction Endonucleolytic cleavage at a junction such as a reciprocal single-stranded crossover between two homologous DNA duplexes (Holliday junction).. In terms of biological role, the RuvA-RuvB-RuvC complex processes Holliday junction (HJ) DNA during genetic recombination and DNA repair. Endonuclease that resolves HJ intermediates. Cleaves cruciform DNA by making single-stranded nicks across the HJ at symmetrical positions within the homologous arms, yielding a 5'-phosphate and a 3'-hydroxyl group; requires a central core of homology in the junction. The consensus cleavage sequence is 5'-(A/T)TT(C/G)-3'. Cleavage occurs on the 3'-side of the TT dinucleotide at the point of strand exchange. HJ branch migration catalyzed by RuvA-RuvB allows RuvC to scan DNA until it finds its consensus sequence, where it cleaves and resolves the cruciform DNA. In Salinibacter ruber (strain DSM 13855 / M31), this protein is Crossover junction endodeoxyribonuclease RuvC.